The chain runs to 185 residues: Ribosome-recycling factor (185 aa).

This sequence belongs to the RRF family.

Its subcellular location is the cytoplasm. In terms of biological role, responsible for the release of ribosomes from messenger RNA at the termination of protein biosynthesis. May increase the efficiency of translation by recycling ribosomes from one round of translation to another. This chain is Ribosome-recycling factor, found in Mycobacterium avium (strain 104).